A 444-amino-acid chain; its full sequence is MIAAPLDAVAGSKGKKPFYSHLYVQVLVAIAAGILLGHFYPELGTQLKPLGDAFIKLVKMIIAPVIFLTVATGIAGMSDLQKVGRVAGKAMLYFLTFSTLALIIGLIVANVVQPGAGMNIDPASLDPAAVATFAAKAHEQSIVGFLTNIIPTTIVGAFADGDILQVLFFSVLFGIALAMVGEKGEQVVNFLNSLTAPVFKLVAILMKAAPIGAFGAMAFTIGKYGVGSIANLAMLIGTFYITSLLFVFIVLGAVARYNGFSIVALLRYIKEELLLVLGTSSSEAALPGLMNKMEKAGCKRSVVGLVIPTGYSFNLDGTNIYMTLAALFIAQATGIHLSWGDQILLLLVAMLSSKGAAGITGAGFITLAATLSVVPSVPVAGMALILGIDRFMSECRALTNLVGNAVATIVVARWENELDTVQLAAALGGQTGEDTSAAGLQPAE.

Helical transmembrane passes span 18-40 (FYSH…GHFY), 53-75 (AFIK…TGIA), 90-112 (AMLY…ANVV), 142-159 (IVGF…GAFA), 163-180 (ILQV…LAMV), 201-222 (LVAI…FTIG), 232-254 (LAML…LGAV), 327-349 (LFIA…LLVA), and 364-386 (FITL…ALIL).

This sequence belongs to the dicarboxylate/amino acid:cation symporter (DAACS) (TC 2.A.23) family.

It localises to the cell inner membrane. In terms of biological role, responsible for the transport of dicarboxylates such as succinate, fumarate, and malate from the periplasm across the inner membrane. This transport system plays an important role in the energy supply of rhizobium-legume symbionts. This is C4-dicarboxylate transport protein (dctA) from Rhizobium leguminosarum.